We begin with the raw amino-acid sequence, 373 residues long: Pollen allergen KBG 31 (373 aa).

The signal sequence occupies residues 1-28; sequence MDKANGAYKTALKAASAVAPAEKFPVFQ.

This sequence belongs to the Poa p IX/Phl p VI allergen family. Pollen.

This Poa pratensis (Kentucky bluegrass) protein is Pollen allergen KBG 31.